Reading from the N-terminus, the 270-residue chain is Putative pyruvate, phosphate dikinase regulatory protein (270 aa).

Residue 153-160 (GVSRTSKT) participates in ADP binding.

The protein belongs to the pyruvate, phosphate/water dikinase regulatory protein family. PDRP subfamily.

It carries out the reaction N(tele)-phospho-L-histidyl/L-threonyl-[pyruvate, phosphate dikinase] + ADP = N(tele)-phospho-L-histidyl/O-phospho-L-threonyl-[pyruvate, phosphate dikinase] + AMP + H(+). The enzyme catalyses N(tele)-phospho-L-histidyl/O-phospho-L-threonyl-[pyruvate, phosphate dikinase] + phosphate + H(+) = N(tele)-phospho-L-histidyl/L-threonyl-[pyruvate, phosphate dikinase] + diphosphate. Functionally, bifunctional serine/threonine kinase and phosphorylase involved in the regulation of the pyruvate, phosphate dikinase (PPDK) by catalyzing its phosphorylation/dephosphorylation. This Halalkalibacterium halodurans (strain ATCC BAA-125 / DSM 18197 / FERM 7344 / JCM 9153 / C-125) (Bacillus halodurans) protein is Putative pyruvate, phosphate dikinase regulatory protein.